We begin with the raw amino-acid sequence, 463 residues long: A-type ATP synthase subunit B (463 aa).

This sequence belongs to the ATPase alpha/beta chains family. In terms of assembly, has multiple subunits with at least A(3), B(3), C, D, E, F, H, I and proteolipid K(x).

The protein localises to the cell membrane. Its function is as follows. Component of the A-type ATP synthase that produces ATP from ADP in the presence of a proton gradient across the membrane. The B chain is a regulatory subunit. The polypeptide is A-type ATP synthase subunit B (Methanothrix thermoacetophila (strain DSM 6194 / JCM 14653 / NBRC 101360 / PT) (Methanosaeta thermophila)).